Consider the following 260-residue polypeptide: Thrombin-like enzyme acutobin (260 aa).

A signal peptide spans Met1 to Ala18. Residues Gln19–Leu24 constitute a propeptide that is removed on maturation. Residues Val25–Ala251 form the Peptidase S1 domain. Disulfide bonds link Cys31–Cys165, Cys52–Cys68, Cys102–Cys258, Cys144–Cys212, Cys176–Cys191, and Cys202–Cys227. His67 acts as the Charge relay system in catalysis. N-linked (GlcNAc...) asparagine glycans are attached at residues Asn101 and Asn105. Asp112 functions as the Charge relay system in the catalytic mechanism. N-linked (GlcNAc...) asparagine glycosylation occurs at Asn124. Ser206 (charge relay system) is an active-site residue. Asn253 carries an N-linked (GlcNAc...) asparagine glycan.

This sequence belongs to the peptidase S1 family. Snake venom subfamily. As to quaternary structure, monomer. In terms of processing, N-glycosylated. In terms of tissue distribution, expressed by the venom gland.

It is found in the secreted. Thrombin-like snake venom serine protease that coagulates human fibrinogen by hydrolysis of the alpha chains (FGA). The polypeptide is Thrombin-like enzyme acutobin (Deinagkistrodon acutus (Hundred-pace snake)).